A 235-amino-acid chain; its full sequence is Pyridoxine/pyridoxamine 5'-phosphate oxidase (235 aa).

Substrate is bound by residues 30 to 33 and Lys88; that span reads RQEY. FMN-binding positions include 83 to 88, 98 to 99, Arg104, Lys105, and Gln127; these read RTVLLK and YT. Positions 145, 149, and 153 each coordinate substrate. FMN is bound by residues 162-163 and Trp207; that span reads QS. A substrate-binding site is contributed by 213-215; the sequence is RLH. Position 217 (Arg217) interacts with FMN.

Belongs to the pyridoxamine 5'-phosphate oxidase family. Homodimer. The cofactor is FMN.

It catalyses the reaction pyridoxamine 5'-phosphate + O2 + H2O = pyridoxal 5'-phosphate + H2O2 + NH4(+). The enzyme catalyses pyridoxine 5'-phosphate + O2 = pyridoxal 5'-phosphate + H2O2. The protein operates within cofactor metabolism; pyridoxal 5'-phosphate salvage; pyridoxal 5'-phosphate from pyridoxamine 5'-phosphate: step 1/1. Its pathway is cofactor metabolism; pyridoxal 5'-phosphate salvage; pyridoxal 5'-phosphate from pyridoxine 5'-phosphate: step 1/1. Its function is as follows. Catalyzes the oxidation of either pyridoxine 5'-phosphate (PNP) or pyridoxamine 5'-phosphate (PMP) into pyridoxal 5'-phosphate (PLP). In Bacteroides fragilis (strain YCH46), this protein is Pyridoxine/pyridoxamine 5'-phosphate oxidase.